We begin with the raw amino-acid sequence, 670 residues long: DNA ligase (670 aa).

Residues 33 to 37 (DAEFD), 82 to 83 (SL), and glutamate 113 contribute to the NAD(+) site. Catalysis depends on lysine 115, which acts as the N6-AMP-lysine intermediate. Arginine 136, glutamate 170, lysine 285, and lysine 309 together coordinate NAD(+). The Zn(2+) site is built by cysteine 403, cysteine 406, cysteine 421, and cysteine 427. Residues 587-670 (EQNLYLSGKT…EVLKAGDNNG (84 aa)) enclose the BRCT domain.

Belongs to the NAD-dependent DNA ligase family. LigA subfamily. Mg(2+) is required as a cofactor. It depends on Mn(2+) as a cofactor.

The catalysed reaction is NAD(+) + (deoxyribonucleotide)n-3'-hydroxyl + 5'-phospho-(deoxyribonucleotide)m = (deoxyribonucleotide)n+m + AMP + beta-nicotinamide D-nucleotide.. Its function is as follows. DNA ligase that catalyzes the formation of phosphodiester linkages between 5'-phosphoryl and 3'-hydroxyl groups in double-stranded DNA using NAD as a coenzyme and as the energy source for the reaction. It is essential for DNA replication and repair of damaged DNA. This Halothermothrix orenii (strain H 168 / OCM 544 / DSM 9562) protein is DNA ligase.